Reading from the N-terminus, the 165-residue chain is Nucleotide-binding protein P9301_05061 (165 aa).

The protein belongs to the YajQ family.

Functionally, nucleotide-binding protein. This is Nucleotide-binding protein P9301_05061 from Prochlorococcus marinus (strain MIT 9301).